A 70-amino-acid polypeptide reads, in one-letter code: Protein SlyX homolog (70 aa).

Belongs to the SlyX family.

The sequence is that of Protein SlyX homolog from Shewanella loihica (strain ATCC BAA-1088 / PV-4).